The following is an 896-amino-acid chain: Zinc finger protein 574 (896 aa).

3 consecutive C2H2-type zinc fingers follow at residues 16-38 (YVCS…QNSH), 76-98 (YQCL…QELH), and 126-148 (YECV…RQTH). S164 bears the Phosphoserine mark. The segment at 214 to 236 (YKCSECSQLFQLPADFLEHQATH) adopts a C2H2-type 4 zinc-finger fold. Over residues 259–272 (VEVPVSQPEPVPSS) the composition is skewed to low complexity. The tract at residues 259 to 303 (VEVPVSQPEPVPSSDHSYELRNGEALGRDRRGRRARRNNSGEPGG) is disordered. Residues 274–287 (HSYELRNGEALGRD) show a composition bias toward basic and acidic residues. S298 is modified (phosphoserine). 4 consecutive C2H2-type zinc fingers follow at residues 309–331 (LFCS…LRSH), 336–358 (FKCP…LGDH), 364–386 (FLCV…RRAH), and 392–413 (HSCP…RRTH). The segment at 434–460 (FPEPAPAETGEPEAPEPPVAEESSAEP) is disordered. 6 consecutive C2H2-type zinc fingers follow at residues 466 to 489 (YRCL…RFVH), 495 to 517 (HKCS…LRTH), 523 to 545 (FPCP…RLTH), 551 to 573 (YRCG…RLVH), 579 to 601 (YRCQ…RYHH), and 607 to 630 (YKCR…LVAH). The C2H2-type 15; degenerate zinc finger occupies 636–659 (HRCSSCGAAFPSSLRLREHRCAAA). The C2H2-type 16 zinc finger occupies 667–689 (FECGTCGKKVGSAARLQAHEAAH). Residues 687 to 733 (AAHAAAGPGEVLAKEPPAPRAPRAARTPITSPTTLGSAAPAAPAAPA) are disordered. Residues 707–732 (APRAARTPITSPTTLGSAAPAAPAAP) are compositionally biased toward low complexity. S717 bears the Phosphoserine mark. 4 consecutive C2H2-type zinc fingers follow at residues 738–760 (LECS…RRIH), 766–788 (YPCP…RRLH), 794–816 (FACE…RRIH), and 822–844 (YSCP…RKTH). R832 carries the post-translational modification Asymmetric dimethylarginine.

The protein belongs to the krueppel C2H2-type zinc-finger protein family.

The protein localises to the nucleus. Functionally, may be involved in transcriptional regulation. The protein is Zinc finger protein 574 (ZNF574) of Bos taurus (Bovine).